The primary structure comprises 351 residues: Fe(3+) ions import ATP-binding protein FbpC (351 aa).

One can recognise an ABC transporter domain in the interval 7-237 (VVLKNICKRF…PKSMFMANFM (231 aa)). 39-46 (GPSGCGKT) contributes to the ATP binding site.

Belongs to the ABC transporter superfamily. Fe(3+) ion importer (TC 3.A.1.10) family. The complex is composed of two ATP-binding proteins (FbpC), two transmembrane proteins (FbpB) and a solute-binding protein (FbpA).

It is found in the cell inner membrane. The catalysed reaction is Fe(3+)(out) + ATP + H2O = Fe(3+)(in) + ADP + phosphate + H(+). Functionally, part of the ABC transporter complex FbpABC involved in Fe(3+) ions import. Responsible for energy coupling to the transport system. In Vibrio cholerae serotype O1 (strain ATCC 39315 / El Tor Inaba N16961), this protein is Fe(3+) ions import ATP-binding protein FbpC.